Here is a 324-residue protein sequence, read N- to C-terminus: NADH-quinone oxidoreductase subunit H 2 (324 aa).

9 helical membrane-spanning segments follow: residues 1-21, 77-97, 109-129, 147-167, 179-199, 214-234, 238-258, 263-283, and 298-318; these read MIGMALTAIISTMLIMVLLVV, ILAPMVAATPVLAGFGVVAFG, VMFLLGMMGLTVYGVVLGALA, LGYEAFLGLSLLGVVMIAGSL, VWFVLLQPFGAALFCIAGVAA, LVAGYLTEYTGMSFGLFFLGE, VLLVASLAVTLFFGGWLGPVW, LPGPIWFGLKVGVIALIFIWI, and FAWKIALPLALANLLLTGLIV.

This sequence belongs to the complex I subunit 1 family. In terms of assembly, NDH-1 is composed of 14 different subunits. Subunits NuoA, H, J, K, L, M, N constitute the membrane sector of the complex.

It localises to the cell inner membrane. The enzyme catalyses a quinone + NADH + 5 H(+)(in) = a quinol + NAD(+) + 4 H(+)(out). Its function is as follows. NDH-1 shuttles electrons from NADH, via FMN and iron-sulfur (Fe-S) centers, to quinones in the respiratory chain. The immediate electron acceptor for the enzyme in this species is believed to be ubiquinone. Couples the redox reaction to proton translocation (for every two electrons transferred, four hydrogen ions are translocated across the cytoplasmic membrane), and thus conserves the redox energy in a proton gradient. This subunit may bind ubiquinone. The sequence is that of NADH-quinone oxidoreductase subunit H 2 from Rhodopseudomonas palustris (strain BisB18).